A 366-amino-acid polypeptide reads, in one-letter code: Prostaglandin F2-alpha receptor (366 aa).

Over 1–31 (MSINSSKQPASSAAGLIANTTCQTENRLSVF) the chain is Extracellular. 2 N-linked (GlcNAc...) asparagine glycosylation sites follow: asparagine 4 and asparagine 19. The chain crosses the membrane as a helical span at residues 32-55 (FSIIFMTVGIVSNSLAIAILMKAY). The Cytoplasmic segment spans residues 56-69 (QRFRRKSKASFLLL). The chain crosses the membrane as a helical span at residues 70-90 (ASGLVITDFFGHLINGGIAVF). Over 91–109 (VYASDKDWIRFDQSNILCS) the chain is Extracellular. A disulfide bridge links cysteine 108 with cysteine 186. A helical transmembrane segment spans residues 110–131 (VFGISMVFSGLCPLFLGSTMAI). The Cytoplasmic portion of the chain corresponds to 132–152 (ERCIGVTNPLFHSTKITSKHV). The helical transmembrane segment at 153–175 (KMILSGVCMFAVFVALLPILGHR) threads the bilayer. Residues 176–198 (DYQIQASRTWCFYNTEHIEDWED) are Extracellular-facing. A helical transmembrane segment spans residues 199–224 (RFYLLFFSSLGLLALGISFSCNAVTG). The Cytoplasmic segment spans residues 225-250 (VTLLRVKFRSQQHRQGRSHHLEMVIQ). The helical transmembrane segment at 251 to 267 (LLAIMCVSCVCWSPFLV) threads the bilayer. Topologically, residues 268–285 (TMANIAINGNNSPVTCET) are extracellular. Residues 286 to 307 (TLFALRMATWNQILDPWVYILL) form a helical membrane-spanning segment. At 308-366 (RKAVLRNLYKLASRCCGVNIISLHIWELSSIKNSLKVAAISESPAAEKENQQASSEAGL) the chain is on the cytoplasmic side.

The protein belongs to the G-protein coupled receptor 1 family. Highest expression in pregnant ovary. Also found in a low extent in the kidney. In the brain, expressed in astrocytes and oligodendrocytes, and meningeal fibroblasts, but not in migroglia cells.

The protein resides in the cell membrane. In terms of biological role, receptor for prostaglandin F2-alpha (PGF2-alpha). The activity of this receptor is mediated by G proteins which activate a phosphatidylinositol-calcium second messenger system. Initiates luteolysis in the corpus luteum. This chain is Prostaglandin F2-alpha receptor (Ptgfr), found in Rattus norvegicus (Rat).